The chain runs to 334 residues: HTH-type transcriptional repressor PurR (334 aa).

The region spanning 2 to 56 (ATIKDVARLAGVSTTTVSHVINKTRFVAETTQEKVMKAVDELNYAPSAVARSLKC) is the HTH lacI-type domain. The segment at residues 4–23 (IKDVARLAGVSTTTVSHVIN) is a DNA-binding region (H-T-H motif). Residues 48 to 56 (SAVARSLKC) mediate DNA binding. 4 residues coordinate hypoxanthine: Phe-73, Lys-189, Phe-220, and Asp-274.

In terms of assembly, homodimer.

Its pathway is purine metabolism; purine nucleotide biosynthesis [regulation]. Its function is as follows. Is the main repressor of the genes involved in the de novo synthesis of purine nucleotides, regulating purB, purC, purEK, purF, purHD, purL, purMN and guaBA expression. PurR is allosterically activated to bind its cognate DNA by binding the purine corepressors, hypoxanthine or guanine, thereby effecting transcription repression. The chain is HTH-type transcriptional repressor PurR from Vibrio campbellii (strain ATCC BAA-1116).